The following is a 433-amino-acid chain: MRVLVLGSGVIGTASAYYLARQGFEVTVVDRQPAVAMETSFANAGQISPGYASPWAAPGVPLKAIKWLLERHAPLAIKLTGDVDQYLWMAQMLRNCTASRYAVNKERMVRLSEYSRDCLDELRAETGIAYESRTLGTTQLFRTQAQLDAAAKDIAVLEQSGVPYELLDRDGIARVEPALAGVKDILAGALRLPNDQTGDCQLFTTKLAEMALKLGVEFRFGQDIQRLDFAGDRINGVWVDGKLETADRYVLALGSYSPQMLKPLGIKAPVYPLKGYSLTVPITNADMAPTSTILDETYKVAITRFDNRIRVGGMAEIAGFDLSLNPRRRETLEMIVNDLYPRGGDLSQASFWTGLRPATPDGTPIVGATAFRNLFLNTGHGTLGWTMACGSGRLLADLIARKKPQISAEGLDISRYGKTREVAKQGHTAPVHQ.

3–17 (VLVLGSGVIGTASAY) is an FAD binding site.

It belongs to the DadA oxidoreductase family. It depends on FAD as a cofactor.

It catalyses the reaction a D-alpha-amino acid + A + H2O = a 2-oxocarboxylate + AH2 + NH4(+). It functions in the pathway amino-acid degradation; D-alanine degradation; NH(3) and pyruvate from D-alanine: step 1/1. Functionally, oxidative deamination of D-amino acids. This Pseudomonas putida (strain W619) protein is D-amino acid dehydrogenase.